The sequence spans 424 residues: MFLLPRFVLVSCIIGSLGFDNPPTNVVSHLNGDWFLFGDSRSDCNHVVNTNPRNYSYMDLNPALCDSGKISSKAGNSIFRSFHFTDFYNYTGEGQQIIFYEGVNFTPYHAFKCTTSGSNDIWMQNKGLFYTQVYKNMAVYRSLTFVNVPYVYNGSAQSTALCKSGSLVLNNPAYIAREANFGDYYYKVEADFYLSGCDEYIVPLCIFNGKFLSNTKYYDDSQYYFNKDTGVIYGLNSTETITTGFDFNCHYLVLPSGNYLAISNELLLTVPTKAICLNKRKDFTPVQVVDSRWNNARQSDNMTAVACQPPYCYFRNSTTNYVGVYDINHGDAGFTSILSGLLYDSPCFSQQGVFRYDNVSSVWPLYPYGRCPTAADINNPDVPICVYDPLPLILLGILLGVAVIIIVVLLLYFMVDNGTRLHDA.

The first 16 residues, 1 to 16 (MFLLPRFVLVSCIIGS), serve as a signal peptide directing secretion. Residues 7-127 (FVLVSCIIGS…SNDIWMQNKG (121 aa)) are esterase domain 1. Residues 17–392 (LGFDNPPTNV…PICVYDPLPL (376 aa)) lie on the Virion surface side of the membrane. Serine 40 (nucleophile) is an active-site residue. A disulfide bridge connects residues cysteine 44 and cysteine 65. Residues asparagine 54, asparagine 89, asparagine 153, asparagine 236, and asparagine 301 are each glycosylated (N-linked (GlcNAc...) asparagine; by host). Intrachain disulfides connect cysteine 113-cysteine 162, cysteine 197-cysteine 276, and cysteine 205-cysteine 249. The receptor binding stretch occupies residues 128-266 (LFYTQVYKNM…GNYLAISNEL (139 aa)). The interval 267 to 379 (LLTVPTKAIC…RCPTAADINN (113 aa)) is esterase domain 2. Cysteine 307 and cysteine 312 are disulfide-bonded. A glycan (N-linked (GlcNAc...) asparagine; by host) is linked at asparagine 316. Active-site charge relay system residues include aspartate 326 and histidine 329. A disulfide bridge links cysteine 347 with cysteine 371. A glycan (N-linked (GlcNAc...) asparagine; by host) is linked at asparagine 358. The chain crosses the membrane as a helical span at residues 393 to 413 (ILLGILLGVAVIIIVVLLLYF). Residues 414–424 (MVDNGTRLHDA) lie on the Intravirion side of the membrane. Asparagine 417 carries an N-linked (GlcNAc...) asparagine; by host glycan.

This sequence belongs to the influenza type C/coronaviruses hemagglutinin-esterase family. In terms of assembly, homodimer; disulfide-linked. Forms a complex with the M protein in the pre-Golgi. Associates then with S-M complex to form a ternary complex S-M-HE. In terms of processing, N-glycosylated in the host RER.

Its subcellular location is the virion membrane. It localises to the host cell membrane. It carries out the reaction N-acetyl-9-O-acetylneuraminate + H2O = N-acetylneuraminate + acetate + H(+). It catalyses the reaction N-acetyl-4-O-acetylneuraminate + H2O = N-acetylneuraminate + acetate + H(+). Functionally, structural protein that makes short spikes at the surface of the virus. Contains receptor binding and receptor-destroying activities. Mediates de-O-acetylation of N-acetyl-4-O-acetylneuraminic acid, which is probably the receptor determinant recognized by the virus on the surface of erythrocytes and susceptible cells. This receptor-destroying activity is important for virus release as it probably helps preventing self-aggregation and ensures the efficient spread of the progeny virus from cell to cell. May serve as a secondary viral attachment protein for initiating infection, the spike protein being the major one. May become a target for both the humoral and the cellular branches of the immune system. In Bovine coronavirus (strain LY-138) (BCoV), this protein is Hemagglutinin-esterase.